Reading from the N-terminus, the 165-residue chain is Ubiquitin-fold modifier-conjugating enzyme 1 (165 aa).

Residue C116 is the Glycyl thioester intermediate of the active site.

The protein belongs to the ubiquitin-conjugating enzyme family. UFC1 subfamily.

In terms of biological role, E2-like enzyme which forms an intermediate with UFM1 via a thioester linkage. The polypeptide is Ubiquitin-fold modifier-conjugating enzyme 1 (Drosophila mojavensis (Fruit fly)).